The following is a 343-amino-acid chain: Anthranilate phosphoribosyltransferase (343 aa).

5-phospho-alpha-D-ribose 1-diphosphate-binding positions include Gly-86, 89–90, Thr-94, 96–99, 114–122, and Ser-126; these read GD, NIST, and KHGNRSASG. Gly-86 contributes to the anthranilate binding site. Ser-98 is a Mg(2+) binding site. Asn-117 provides a ligand contact to anthranilate. Arg-172 lines the anthranilate pocket. Mg(2+) is bound by residues Asp-231 and Glu-232.

The protein belongs to the anthranilate phosphoribosyltransferase family. In terms of assembly, homodimer. Mg(2+) is required as a cofactor.

The catalysed reaction is N-(5-phospho-beta-D-ribosyl)anthranilate + diphosphate = 5-phospho-alpha-D-ribose 1-diphosphate + anthranilate. Its pathway is amino-acid biosynthesis; L-tryptophan biosynthesis; L-tryptophan from chorismate: step 2/5. In terms of biological role, catalyzes the transfer of the phosphoribosyl group of 5-phosphorylribose-1-pyrophosphate (PRPP) to anthranilate to yield N-(5'-phosphoribosyl)-anthranilate (PRA). The chain is Anthranilate phosphoribosyltransferase from Synechococcus sp. (strain JA-3-3Ab) (Cyanobacteria bacterium Yellowstone A-Prime).